We begin with the raw amino-acid sequence, 547 residues long: Inositol 1,4,5-trisphosphate receptor-interacting protein-like 1 (547 aa).

The first 16 residues, 1–16 (MAVISLLFLAVMYVVH), serve as a signal peptide directing secretion. The Extracellular portion of the chain corresponds to 17-96 (HPLMVSDRMD…PFQASGQDGG (80 aa)). The stretch at 28-66 (DTLARSRQLEKRMSEEMRQLEIEFEERSRAAEEKQKAEN) forms a coiled coil. A helical transmembrane segment spans residues 97–117 (PLGWMLGNLWNAGLFCLFLIF). The Cytoplasmic portion of the chain corresponds to 118-547 (ELLRQNMQHE…LPCSPLAGGL (430 aa)).

It belongs to the ITPRIP family.

Its subcellular location is the cell membrane. Functionally, functions as a ligand of CD3E, inhibiting TCR-CD3 complex signaling to regulate T cell activation. Induces stable CD3E-NCK1 binding, thereby preventing the CD3E-ZAP70 interaction and subsequently inhibiting the activation of the downstream ERK-NFkB signaling cascade and calcium influx. The sequence is that of Inositol 1,4,5-trisphosphate receptor-interacting protein-like 1 (Itpripl1) from Rattus norvegicus (Rat).